The chain runs to 129 residues: Chorion class A protein L11 (129 aa).

An N-terminal signal peptide occupies residues 1-21 (MSTFAFLLLCVQACLIQNVYG). The segment at 22-64 (QCLGRGLGGCGCGGGLGGYGLGYGLGGYGGGYGYGGYGGGYYG) is left arm. The interval 65–112 (GYGGEGVGNVGVAGVLPVGGVTAVGGRVPIIGGVEFGGPACAGGCVSI) is central domain. The right arm stretch occupies residues 113-129 (CGHCAPTCGCGYGGLYY).

This sequence belongs to the chorion protein family.

Its function is as follows. This protein is one of many from the eggshell of the silk moth. This chain is Chorion class A protein L11, found in Bombyx mori (Silk moth).